The sequence spans 143 residues: Nucleoside diphosphate kinase (143 aa).

Positions 11, 59, 87, 93, 104, and 114 each coordinate ATP. His117 functions as the Pros-phosphohistidine intermediate in the catalytic mechanism.

It belongs to the NDK family. As to quaternary structure, homotetramer. The cofactor is Mg(2+).

It localises to the cytoplasm. The catalysed reaction is a 2'-deoxyribonucleoside 5'-diphosphate + ATP = a 2'-deoxyribonucleoside 5'-triphosphate + ADP. It catalyses the reaction a ribonucleoside 5'-diphosphate + ATP = a ribonucleoside 5'-triphosphate + ADP. In terms of biological role, major role in the synthesis of nucleoside triphosphates other than ATP. The ATP gamma phosphate is transferred to the NDP beta phosphate via a ping-pong mechanism, using a phosphorylated active-site intermediate. The polypeptide is Nucleoside diphosphate kinase (Pseudomonas aeruginosa (strain UCBPP-PA14)).